We begin with the raw amino-acid sequence, 289 residues long: Shikimate dehydrogenase (NADP(+)) (289 aa).

Residues 19–21 (SLS) and Thr-66 each bind shikimate. Residue Lys-70 is the Proton acceptor of the active site. 2 residues coordinate shikimate: Asn-91 and Asp-106. NADP(+)-binding positions include 131–135 (GNGGA) and Leu-229. Residue Tyr-231 participates in shikimate binding. Residue Gly-252 coordinates NADP(+).

This sequence belongs to the shikimate dehydrogenase family. In terms of assembly, homodimer.

It catalyses the reaction shikimate + NADP(+) = 3-dehydroshikimate + NADPH + H(+). The protein operates within metabolic intermediate biosynthesis; chorismate biosynthesis; chorismate from D-erythrose 4-phosphate and phosphoenolpyruvate: step 4/7. Functionally, involved in the biosynthesis of the chorismate, which leads to the biosynthesis of aromatic amino acids. Catalyzes the reversible NADPH linked reduction of 3-dehydroshikimate (DHSA) to yield shikimate (SA). In Trichormus variabilis (strain ATCC 29413 / PCC 7937) (Anabaena variabilis), this protein is Shikimate dehydrogenase (NADP(+)).